Consider the following 78-residue polypeptide: Acyl carrier protein (78 aa).

In terms of domain architecture, Carrier spans Ser2–Lys77. Ser37 is subject to O-(pantetheine 4'-phosphoryl)serine.

This sequence belongs to the acyl carrier protein (ACP) family. In terms of processing, 4'-phosphopantetheine is transferred from CoA to a specific serine of apo-ACP by AcpS. This modification is essential for activity because fatty acids are bound in thioester linkage to the sulfhydryl of the prosthetic group.

Its subcellular location is the cytoplasm. Its pathway is lipid metabolism; fatty acid biosynthesis. Its function is as follows. Carrier of the growing fatty acid chain in fatty acid biosynthesis. The protein is Acyl carrier protein of Sphingopyxis alaskensis (strain DSM 13593 / LMG 18877 / RB2256) (Sphingomonas alaskensis).